Consider the following 645-residue polypeptide: uncharacterized protein (645 aa).

The N-terminal stretch at 1–23 (MPSSHRLSATILIFLSLTYISSS) is a signal peptide. Disordered regions lie at residues 30 to 58 (ITDK…TTAS) and 92 to 129 (NSNA…AGIP). Residues 92-102 (NSNANPYFSTT) show a composition bias toward polar residues. N-linked (GlcNAc...) asparagine glycosylation occurs at Asn-107. Residues 107–119 (NRSDSSQKARDPD) are compositionally biased toward basic and acidic residues. One can recognise a PAN 1 domain in the interval 135–214 (CFRRYENSII…QTRDYFEPTD (80 aa)). Cystine bridges form between Cys-161–Cys-187 and Cys-165–Cys-175. The tract at residues 225 to 247 (ESSSSAPSSEDEDSPPSPPPSAP) is disordered. 2 consecutive PAN domains span residues 281-369 (CPRG…EKIC) and 378-465 (CPST…EVEC). Disulfide bonds link Cys-281-Cys-369, Cys-313-Cys-341, Cys-317-Cys-329, Cys-378-Cys-465, Cys-407-Cys-436, and Cys-411-Cys-422. Asn-421 carries an N-linked (GlcNAc...) asparagine glycan. Residues 556-567 (AGELENNDHEQI) show a composition bias toward basic and acidic residues. The tract at residues 556 to 582 (AGELENNDHEQIEDNNTDASEDPVPTK) is disordered. Asn-570 carries an N-linked (GlcNAc...) asparagine glycan.

This is an uncharacterized protein from Caenorhabditis elegans.